Reading from the N-terminus, the 338-residue chain is Phenylalanine--tRNA ligase alpha subunit (338 aa).

Residue E253 coordinates Mg(2+).

Belongs to the class-II aminoacyl-tRNA synthetase family. Phe-tRNA synthetase alpha subunit type 1 subfamily. As to quaternary structure, tetramer of two alpha and two beta subunits. Mg(2+) is required as a cofactor.

The protein resides in the cytoplasm. The catalysed reaction is tRNA(Phe) + L-phenylalanine + ATP = L-phenylalanyl-tRNA(Phe) + AMP + diphosphate + H(+). The sequence is that of Phenylalanine--tRNA ligase alpha subunit from Trichlorobacter lovleyi (strain ATCC BAA-1151 / DSM 17278 / SZ) (Geobacter lovleyi).